A 347-amino-acid chain; its full sequence is Indole-3-glycerol phosphate lyase, chloroplastic (347 aa).

2 disordered regions span residues 1–38 (MAFAPKTSSSSSLSSALQAAQSPPLLLRRMSSTATPRR) and 64–89 (APPQAPAPAPVPPKQAAAPAERRSRP). A chloroplast-targeting transit peptide spans 1–53 (MAFAPKTSSSSSLSSALQAAQSPPLLLRRMSSTATPRRRYDAAVVVTTTTTAR). A compositionally biased stretch (low complexity) spans 8-27 (SSSSSLSSALQAAQSPPLLL). Pro residues predominate over residues 64-76 (APPQAPAPAPVPP).

It belongs to the TrpA family. As to quaternary structure, tetramer of two alpha and two beta chains for the tryptophan synthase activity. Homodimer of alpha chains for the indole-3-glycerol phosphate lyase activity.

The protein resides in the plastid. It localises to the chloroplast. It catalyses the reaction (1S,2R)-1-C-(indol-3-yl)glycerol 3-phosphate = indole + D-glyceraldehyde 3-phosphate. The catalysed reaction is (1S,2R)-1-C-(indol-3-yl)glycerol 3-phosphate + L-serine = D-glyceraldehyde 3-phosphate + L-tryptophan + H2O. It functions in the pathway secondary metabolite biosynthesis; 2,4-dihydroxy-1,4-benzoxazin-3-one biosynthesis; 2,4-dihydroxy-1,4-benzoxazin-3-one from indoleglycerol phosphate: step 1/5. It participates in amino-acid biosynthesis; L-tryptophan biosynthesis; L-tryptophan from chorismate: step 5/5. Functionally, the alpha subunit is responsible for the aldol cleavage of indoleglycerol phosphate to indole and glyceraldehyde 3-phosphate. In bacteria, tryptophan synthase alpha (TSA) activity is almost completely dependent on formation of an active alpha2beta2 complex with tryptophan synthase beta (TSB), and indole is usually not released during tryptophan synthesis. In maize, the TSA homolog BX1 catalyzes the formation of free indole from indole-3-glycerol phosphate, independently of TSB. In Zea mays (Maize), this protein is Indole-3-glycerol phosphate lyase, chloroplastic (BX1).